Here is a 20-residue protein sequence, read N- to C-terminus: Unknown protein from 2D-PAGE (20 aa).

This Nicotiana tabacum (Common tobacco) protein is Unknown protein from 2D-PAGE.